Reading from the N-terminus, the 179-residue chain is Large ribosomal subunit protein uL5 (179 aa).

The protein belongs to the universal ribosomal protein uL5 family. In terms of assembly, part of the 50S ribosomal subunit; part of the 5S rRNA/L5/L18/L25 subcomplex. Contacts the 5S rRNA and the P site tRNA. Forms a bridge to the 30S subunit in the 70S ribosome.

This is one of the proteins that bind and probably mediate the attachment of the 5S RNA into the large ribosomal subunit, where it forms part of the central protuberance. In the 70S ribosome it contacts protein S13 of the 30S subunit (bridge B1b), connecting the 2 subunits; this bridge is implicated in subunit movement. Contacts the P site tRNA; the 5S rRNA and some of its associated proteins might help stabilize positioning of ribosome-bound tRNAs. This chain is Large ribosomal subunit protein uL5, found in Haemophilus ducreyi (strain 35000HP / ATCC 700724).